A 968-amino-acid chain; its full sequence is RNA polymerase-associated protein RapA (968 aa).

Residues 164 to 334 (DVGRRHAPRV…FARLRLLDPN (171 aa)) enclose the Helicase ATP-binding domain. 177 to 184 (DEVGLGKT) contacts ATP. The short motif at 280 to 283 (DEAH) is the DEAH box element. The 196-residue stretch at 490 to 685 (RVEWLMGYLT…ALKAQLEQGR (196 aa)) folds into the Helicase C-terminal domain.

Belongs to the SNF2/RAD54 helicase family. RapA subfamily. In terms of assembly, interacts with the RNAP. Has a higher affinity for the core RNAP than for the holoenzyme. Its ATPase activity is stimulated by binding to RNAP.

Functionally, transcription regulator that activates transcription by stimulating RNA polymerase (RNAP) recycling in case of stress conditions such as supercoiled DNA or high salt concentrations. Probably acts by releasing the RNAP, when it is trapped or immobilized on tightly supercoiled DNA. Does not activate transcription on linear DNA. Probably not involved in DNA repair. This Salmonella typhi protein is RNA polymerase-associated protein RapA.